We begin with the raw amino-acid sequence, 296 residues long: MAGGTLQDRSEEEDVRVGVDRFPERQPIGTAADDLGRDYSEPPAAPLFEASELSSWSFYRAGIAEFVATFLFLYVTVLTVMGVSKSPSKCGTVGIQGIAWAFGGMIFALVYCTAGVSGGHINPAVTFGLLLARKLSLTRAVYYVVMQCLGAVCGAGVVKAFGSALYESAGGGANAVSPGYTKGDGLGAEVVGTFVLVYTVFSATDAKRTARDSHVPALAPLPIGFAVFLVHLATIPITGTGINPARSLGAAIIYDNPHGWHGHWIFWVGPFAGAALAAVYHQVVLRAIPFKSSAHY.

Helical transmembrane passes span 63–83 (IAEF…VMGV) and 98–120 (IAWA…SGGH). Positions 122–124 (NPA) match the NPA 1 motif. 3 consecutive transmembrane segments (helical) span residues 141 to 161 (VYYV…VKAF), 183 to 203 (GDGL…VFSA), and 217 to 237 (ALAP…TIPI). The short motif at 243–245 (NPA) is the NPA 2 element. The helical transmembrane segment at 265 to 285 (IFWVGPFAGAALAAVYHQVVL) threads the bilayer.

Belongs to the MIP/aquaporin (TC 1.A.8) family. PIP (TC 1.A.8.11) subfamily.

The protein localises to the cell membrane. Functionally, aquaporins facilitate the transport of water and small neutral solutes across cell membranes. This chain is Aquaporin PIP1-6 (PIP1-6), found in Zea mays (Maize).